The chain runs to 391 residues: Probable protein arginine N-methyltransferase 6.1 (391 aa).

The interval 1-35 (MLPSHLNGHSPLARRCPRLSAASPPATGDSDAAAA) is disordered. The span at 20–35 (SAASPPATGDSDAAAA) shows a compositional bias: low complexity. Positions 45–391 (DRIYFQSYSH…QTLVKDYAMR (347 aa)) constitute an SAM-dependent MTase PRMT-type domain. S-adenosyl-L-methionine contacts are provided by His-58, Arg-67, Gly-91, Glu-113, and Glu-142. Catalysis depends on residues Glu-156 and Glu-165.

The protein belongs to the class I-like SAM-binding methyltransferase superfamily. Protein arginine N-methyltransferase family. PRMT6 subfamily.

Its function is as follows. Arginine methyltransferase that can both catalyze the formation of omega-N monomethylarginine (MMA) and asymmetrical dimethylarginine (aDMA). The protein is Probable protein arginine N-methyltransferase 6.1 (PRMT6.1) of Oryza sativa subsp. japonica (Rice).